The sequence spans 154 residues: Crossover junction endodeoxyribonuclease RuvC (154 aa).

Catalysis depends on residues aspartate 7, glutamate 67, and aspartate 139. Mg(2+) is bound by residues aspartate 7, glutamate 67, and aspartate 139.

Belongs to the RuvC family. In terms of assembly, homodimer which binds Holliday junction (HJ) DNA. The HJ becomes 2-fold symmetrical on binding to RuvC with unstacked arms; it has a different conformation from HJ DNA in complex with RuvA. In the full resolvosome a probable DNA-RuvA(4)-RuvB(12)-RuvC(2) complex forms which resolves the HJ. The cofactor is Mg(2+).

Its subcellular location is the cytoplasm. The enzyme catalyses Endonucleolytic cleavage at a junction such as a reciprocal single-stranded crossover between two homologous DNA duplexes (Holliday junction).. Its function is as follows. The RuvA-RuvB-RuvC complex processes Holliday junction (HJ) DNA during genetic recombination and DNA repair. Endonuclease that resolves HJ intermediates. Cleaves cruciform DNA by making single-stranded nicks across the HJ at symmetrical positions within the homologous arms, yielding a 5'-phosphate and a 3'-hydroxyl group; requires a central core of homology in the junction. The consensus cleavage sequence is 5'-(A/T)TT(C/G)-3'. Cleavage occurs on the 3'-side of the TT dinucleotide at the point of strand exchange. HJ branch migration catalyzed by RuvA-RuvB allows RuvC to scan DNA until it finds its consensus sequence, where it cleaves and resolves the cruciform DNA. This is Crossover junction endodeoxyribonuclease RuvC from Prochlorococcus marinus (strain MIT 9303).